We begin with the raw amino-acid sequence, 414 residues long: Dual-specificity RNA methyltransferase RlmN (414 aa).

Glutamate 127 acts as the Proton acceptor in catalysis. In terms of domain architecture, Radical SAM core spans 133 to 380; it reads GEGRGTLCVS…SPIRMPRGRD (248 aa). Cysteine 140 and cysteine 385 form a disulfide bridge. Residues cysteine 147, cysteine 151, and cysteine 154 each contribute to the [4Fe-4S] cluster site. Residues 211–212, serine 243, 265–267, and asparagine 342 each bind S-adenosyl-L-methionine; these read GE and SLH. The active-site S-methylcysteine intermediate is cysteine 385.

Belongs to the radical SAM superfamily. RlmN family. [4Fe-4S] cluster is required as a cofactor.

It is found in the cytoplasm. It carries out the reaction adenosine(2503) in 23S rRNA + 2 reduced [2Fe-2S]-[ferredoxin] + 2 S-adenosyl-L-methionine = 2-methyladenosine(2503) in 23S rRNA + 5'-deoxyadenosine + L-methionine + 2 oxidized [2Fe-2S]-[ferredoxin] + S-adenosyl-L-homocysteine. The catalysed reaction is adenosine(37) in tRNA + 2 reduced [2Fe-2S]-[ferredoxin] + 2 S-adenosyl-L-methionine = 2-methyladenosine(37) in tRNA + 5'-deoxyadenosine + L-methionine + 2 oxidized [2Fe-2S]-[ferredoxin] + S-adenosyl-L-homocysteine. Specifically methylates position 2 of adenine 2503 in 23S rRNA and position 2 of adenine 37 in tRNAs. m2A2503 modification seems to play a crucial role in the proofreading step occurring at the peptidyl transferase center and thus would serve to optimize ribosomal fidelity. This is Dual-specificity RNA methyltransferase RlmN from Bartonella bacilliformis (strain ATCC 35685 / KC583 / Herrer 020/F12,63).